Reading from the N-terminus, the 91-residue chain is Small ribosomal subunit protein uS15 (91 aa).

The protein belongs to the universal ribosomal protein uS15 family. As to quaternary structure, part of the 30S ribosomal subunit. Forms a bridge to the 50S subunit in the 70S ribosome, contacting the 23S rRNA.

Its function is as follows. One of the primary rRNA binding proteins, it binds directly to 16S rRNA where it helps nucleate assembly of the platform of the 30S subunit by binding and bridging several RNA helices of the 16S rRNA. Functionally, forms an intersubunit bridge (bridge B4) with the 23S rRNA of the 50S subunit in the ribosome. The protein is Small ribosomal subunit protein uS15 of Legionella pneumophila (strain Corby).